We begin with the raw amino-acid sequence, 165 residues long: Transmembrane protein 128 (165 aa).

Transmembrane regions (helical) follow at residues asparagine 49–phenylalanine 69, tryptophan 81–valine 101, leucine 119–tryptophan 139, and phenylalanine 144–leucine 164.

It localises to the membrane. The chain is Transmembrane protein 128 (TMEM128) from Homo sapiens (Human).